The following is a 429-amino-acid chain: Adenylosuccinate synthetase (429 aa).

GTP contacts are provided by residues 12-18 (GDEGKGK) and 40-42 (GHT). The Proton acceptor role is filled by Asp13. Residues Asp13 and Gly40 each contribute to the Mg(2+) site. IMP-binding positions include 13–16 (DEGK), 38–41 (NAGH), Thr129, Arg143, Gln223, Thr238, and Arg302. Residue His41 is the Proton donor of the active site. Residue 298 to 304 (TVTGRKR) participates in substrate binding. Residues Arg304, 330–332 (KLD), and 412–414 (STS) each bind GTP.

This sequence belongs to the adenylosuccinate synthetase family. As to quaternary structure, homodimer. The cofactor is Mg(2+).

It is found in the cytoplasm. The catalysed reaction is IMP + L-aspartate + GTP = N(6)-(1,2-dicarboxyethyl)-AMP + GDP + phosphate + 2 H(+). It functions in the pathway purine metabolism; AMP biosynthesis via de novo pathway; AMP from IMP: step 1/2. Functionally, plays an important role in the de novo pathway of purine nucleotide biosynthesis. Catalyzes the first committed step in the biosynthesis of AMP from IMP. This is Adenylosuccinate synthetase from Rhizorhabdus wittichii (strain DSM 6014 / CCUG 31198 / JCM 15750 / NBRC 105917 / EY 4224 / RW1) (Sphingomonas wittichii).